A 465-amino-acid chain; its full sequence is Cysteine--tRNA ligase (465 aa).

Residue Cys-27 participates in Zn(2+) binding. The 'HIGH' region signature appears at 29 to 39; the sequence is PTVYDDAHLGH. Residues Cys-207, His-237, and Glu-241 each coordinate Zn(2+). Residues 269–273 carry the 'KMSKS' region motif; the sequence is KMSKS. Lys-272 is an ATP binding site.

It belongs to the class-I aminoacyl-tRNA synthetase family. As to quaternary structure, monomer. Zn(2+) is required as a cofactor.

Its subcellular location is the cytoplasm. The catalysed reaction is tRNA(Cys) + L-cysteine + ATP = L-cysteinyl-tRNA(Cys) + AMP + diphosphate. The sequence is that of Cysteine--tRNA ligase from Helicobacter acinonychis (strain Sheeba).